A 77-amino-acid chain; its full sequence is Small ribosomal subunit protein bS20 (77 aa).

The tract at residues 47-77 (ASSSIDKAESKGLIHKNKASRDKARLAAKLG) is disordered.

This sequence belongs to the bacterial ribosomal protein bS20 family.

In terms of biological role, binds directly to 16S ribosomal RNA. This is Small ribosomal subunit protein bS20 from Streptococcus pyogenes serotype M1.